A 253-amino-acid chain; its full sequence is Imidazole glycerol phosphate synthase subunit HisF (253 aa).

Active-site residues include Asp-11 and Asp-130.

The protein belongs to the HisA/HisF family. Heterodimer of HisH and HisF.

The protein resides in the cytoplasm. It catalyses the reaction 5-[(5-phospho-1-deoxy-D-ribulos-1-ylimino)methylamino]-1-(5-phospho-beta-D-ribosyl)imidazole-4-carboxamide + L-glutamine = D-erythro-1-(imidazol-4-yl)glycerol 3-phosphate + 5-amino-1-(5-phospho-beta-D-ribosyl)imidazole-4-carboxamide + L-glutamate + H(+). Its pathway is amino-acid biosynthesis; L-histidine biosynthesis; L-histidine from 5-phospho-alpha-D-ribose 1-diphosphate: step 5/9. IGPS catalyzes the conversion of PRFAR and glutamine to IGP, AICAR and glutamate. The HisF subunit catalyzes the cyclization activity that produces IGP and AICAR from PRFAR using the ammonia provided by the HisH subunit. This Dehalococcoides mccartyi (strain ATCC BAA-2266 / KCTC 15142 / 195) (Dehalococcoides ethenogenes (strain 195)) protein is Imidazole glycerol phosphate synthase subunit HisF.